Here is a 2439-residue protein sequence, read N- to C-terminus: MPAAADWRLLMGMDPEDLGDEDEKICDLILMVKPRDLKADDSEKMIQLFRISQTLLRMKLDEIKCAYEVVDSAGAEQARIENELKAKVLKLESELEMAQRVMGGGDKHFLRDEIRQLESHLERKEKEVTQLEKEMGKERKSNEELALRAEEAEEKNRKLKREIKQLTRKNEQLQQDIEFYRKEAEQRESLQTKEESNEIQRRLTKANQQLYQCMEELQHAEDMAANLRSENEHLQKNLEESVKEMEKMTDEYNKMKIAVQQTDAIMDQLRKDRDHAKLQVRELTDQIQARVEEDDPVMAAVNAKVEEWKSVLSGKDLEILEYQQMIRDLREKLRTAQMDSDKSNIIALQQAVQERDNQIKMLSEQVEQYTTEMERNAMLIEELKRPLKKDKGHSSDHQRRLEDLSAKLQVAERKVLEAQRAAQLAERDARDKDKELNDTLSRIRLYESGTDGLEAAISEIKECKNQIRVRDREIEGMIKEINQLEMKINNLLDENEDLRERLGLNPKEELDLSEFRRSKILKQRQYKAENQVLLKEIERLEEERLELKQRIRALVKDKGVTVVSNSLLDNSVEEKPVRSLRPSSGSTDDEIKRKNERLQKELSNKEKELELRRSESAQFKAKLNEMLNENKQLEQGMKEILQAIQDTQKKTPTSTGVSIPSLERLVNALEMKYSEGKFDASLHLRTQVDQLTGRNEELRLEMKTAREEAANTLSQLTKANEKIARLESEMESMSKSTGSSIPHKTLALPEEMTPTSAEAINALNEYTVQLLQEIKNKGDSIEQLGSALEEYKRKFAVIRHQQGLLYKEHQSERESWQKERDSFAELKSKLEEQREVDAVKIKEYNHLLETLEKDPSEIRREMAETGRKIVVLRVNEKCLTRRYTTLLELEQHLRKENAKLKEDFTQMQAVVTERIGYLQRFKEMAAFKMASLQKSLDVSVPASELERANKQYTELTIKYRNLLQKDNHLVQKTTSLEHLETENMSLRERIDSINKELEISKEKLHTLEQAFENISTTGGEIIMDKATKAVANSEIVSVSRRITTLEMKELNERQRAEHAQKMYEHLRNSLKQVEERNFELETKFAELTKLNLEAQRIERELRDELADSVSKHISDADRKRITELEKTEANLRIEVSKLREVSDVAKMQVSALDARQQSREKEVESLRRQVLDYQAESDEKALIAKLHQHIVALQLSETTAISRLEATNTRLQKLEAQKLRDEQKLDEQQQALWHARQEGHQRARHLRHTIQALRRQFSGALPLAQQEKFSNTMLHLQEDRARVREDAQIAEEERRKAEGKAQELELKLKGLEELIATLKDAKGAQKVSEWHKKLEDVRLLEMRQSRELNTQREEIKYLKNCVAEQECTISGLEEELVQQNNLLEERQLIWDQREVQLERQLDSYEKQQNEVLNTAQKFEEATGSLPDPNQPLANQLDYALGKIKEHVRTILETKTTCKILEEKLKEKEAALWSSEQNVLSRDKVINELRLRLPAAAEREKLLADLSKQEDSESQPTLKVAHQTINNLQGRLDQKEEVLKKYQNLLGKARQEQEEIAKRHEEEVRALHQKLDVYMDTSLDRFKQTALELIKKPTITVPTSKHLVRLAEMEQTVAEQDNSLSSLSQKLKIVTQELDQQRQVTAAQAMEHAADMARLEDKHAAQMKGLSQEAEELRAQLIQMEKELHYLRTELEAQKEANVRSPSNTMKNLVERLKNQLALKEKQLKALSKALLELRAELTSQAEQQIITNAAQKEEALNVQQIVDKQTKELRACVRDLNEELQLAKDGVRAAKARENSLKEDLETLNKDLQRSQKSQNKLQSEKEALEEHLNELKKKIQRLSSGLQAQVESDGPTVDSLQKKIRKLEHELDRKSISEPADKRSTLKEDKSSKEEVVRWEEGKKWQARVDKMRNVLKEKEREVDSQAKQLATMKELYSRLEQEKVSLQKKLKGRGVTADQVVGARTLEADKEIEELHKRNAELEQQIKVMKQQQALPRDAAMEDITIRNRYLEERLYSMESRLSKEPPSRPSTSGRGSDTPSQREHEFQKENLRLSTENLELRFQLEQANKDLPRLKDQVSDLKEMCSVLKKEKAEVEKRLSHLRGSGRSGKTIPELEKTIGLMKKVVEKVQRENENLKKTSEVNVQEQLATLERDHEKLKSEYEKLKGKQEEQLNSRLESKTKGIEKIMMENERLRKEIKKEAEAAEKLRVAKASLEVANEKLKAELEETHQRLLLAQSKGATLLGVDSKTWKSSVVTRLFENKMKGLESDIAKKNISISELKVQLKEANEKLQATQHTVIQLKEQVELLKNVPVEATTDEGLAREYQSVRLANKQLEREKAQLLRQIQRNEVQLGTNKDGPGYTELQEQIKAANNEKKKLQDEVRKLTQELKHFDPTFFEELEDLKFNYNLEVKKNIVLEEQLKKLSDQFGVAIPDVSIN.

2 coiled-coil regions span residues 75-913 (AEQA…VVTE) and 1271-1576 (NTML…YMDT). 3 disordered regions span residues 1802–1824 (ETLN…EKEA), 1867–1890 (ELDR…KSSK), and 2017–2048 (ESRL…FQKE). The span at 2039–2048 (SQREHEFQKE) shows a compositional bias: basic and acidic residues. A coiled-coil region spans residues 2046–2394 (QKENLRLSTE…KLTQELKHFD (349 aa)).

Part of the tectonic-like complex (also named B9 complex).

The protein resides in the cytoplasm. The protein localises to the cytoskeleton. Its subcellular location is the microtubule organizing center. It is found in the centrosome. It localises to the centriolar satellite. The protein resides in the nucleus. The protein localises to the cilium basal body. Its function is as follows. Involved in early and late steps in cilia formation. May play a role in early ciliogenesis in the disappearance of centriolar satellites and in the transition of primary ciliar vesicles (PCVs) to capped ciliary vesicles (CCVs). In the ciliary transition zone is part of the tectonic-like complex which is required for tissue-specific ciliogenesis and may regulate ciliary membrane composition. Involved in regulation of the BBSome complex integrity and in ciliary targeting of selected BBSome cargos. Required for the correct localization of ciliary and phototransduction proteins in retinal photoreceptor cells; may play a role in ciliary transport processes. Involved in development of the nervous system and kidney. The protein is Centrosomal protein of 290 kDa (cep290) of Danio rerio (Zebrafish).